Consider the following 430-residue polypeptide: Mannan endo-1,4-beta-mannosidase (430 aa).

Glu-173 serves as the catalytic Proton donor. Glu-269 acts as the Nucleophile in catalysis. CBM10 domains are found at residues 357–390 and 395–424; these read SCGT…CVVA and SCNW…CIAA.

The protein belongs to the glycosyl hydrolase 5 (cellulase A) family.

The enzyme catalyses Random hydrolysis of (1-&gt;4)-beta-D-mannosidic linkages in mannans, galactomannans and glucomannans.. Its function is as follows. Catalyzes the endo hydrolysis of beta-1,4-linked mannan, galactomannan and glucomannan. It is able to hydrolyze mannosidic linkages that are flanked by mannose or glucose. This is Mannan endo-1,4-beta-mannosidase from Cellvibrio japonicus (strain Ueda107) (Pseudomonas fluorescens subsp. cellulosa).